The following is a 215-amino-acid chain: Probable transaldolase 1 (215 aa).

Lys-83 functions as the Schiff-base intermediate with substrate in the catalytic mechanism.

Belongs to the transaldolase family. Type 3B subfamily.

The protein resides in the cytoplasm. It carries out the reaction D-sedoheptulose 7-phosphate + D-glyceraldehyde 3-phosphate = D-erythrose 4-phosphate + beta-D-fructose 6-phosphate. It functions in the pathway carbohydrate degradation; pentose phosphate pathway; D-glyceraldehyde 3-phosphate and beta-D-fructose 6-phosphate from D-ribose 5-phosphate and D-xylulose 5-phosphate (non-oxidative stage): step 2/3. Functionally, transaldolase is important for the balance of metabolites in the pentose-phosphate pathway. This Bacillus cereus (strain ATCC 14579 / DSM 31 / CCUG 7414 / JCM 2152 / NBRC 15305 / NCIMB 9373 / NCTC 2599 / NRRL B-3711) protein is Probable transaldolase 1.